The chain runs to 1076 residues: DNA-directed RNA polymerase subunit beta (1076 aa).

This sequence belongs to the RNA polymerase beta chain family. As to quaternary structure, in plastids the minimal PEP RNA polymerase catalytic core is composed of four subunits: alpha, beta, beta', and beta''. When a (nuclear-encoded) sigma factor is associated with the core the holoenzyme is formed, which can initiate transcription.

It is found in the plastid. The protein localises to the chloroplast. The catalysed reaction is RNA(n) + a ribonucleoside 5'-triphosphate = RNA(n+1) + diphosphate. Functionally, DNA-dependent RNA polymerase catalyzes the transcription of DNA into RNA using the four ribonucleoside triphosphates as substrates. The polypeptide is DNA-directed RNA polymerase subunit beta (Hordeum vulgare (Barley)).